We begin with the raw amino-acid sequence, 344 residues long: AA9 family lytic polysaccharide monooxygenase D (344 aa).

Positions 1 to 23 are cleaved as a signal peptide; sequence MKTATSYAAFLLSALAALPHASA. Cu(2+) is bound at residue H24. C70 and C193 form a disulfide bridge. An O2-binding site is contributed by H179. Y190 contacts Cu(2+). N-linked (GlcNAc...) asparagine glycosylation is found at N201 and N207. The segment at 240-321 is disordered; the sequence is PPLSNLVSGD…PTTSGNLSAN (82 aa). Low complexity predominate over residues 259 to 292; the sequence is STSSATLSGGAAPTGTASGSTPAGTSQPSSTTGT. Positions 311–320 are enriched in polar residues; sequence APTTSGNLSA. Residue N317 is glycosylated (N-linked (GlcNAc...) asparagine).

This sequence belongs to the polysaccharide monooxygenase AA9 family. It depends on Cu(2+) as a cofactor.

It localises to the secreted. It carries out the reaction [(1-&gt;4)-beta-D-glucosyl]n+m + reduced acceptor + O2 = 4-dehydro-beta-D-glucosyl-[(1-&gt;4)-beta-D-glucosyl]n-1 + [(1-&gt;4)-beta-D-glucosyl]m + acceptor + H2O.. Lytic polysaccharide monooxygenase (LPMO) that depolymerizes crystalline and amorphous polysaccharides via the oxidation of scissile alpha- or beta-(1-4)-glycosidic bonds, yielding C1 or C4 oxidation products. Catalysis by LPMOs requires the reduction of the active-site copper from Cu(II) to Cu(I) by a reducing agent and H(2)O(2) or O(2) as a cosubstrate. The polypeptide is AA9 family lytic polysaccharide monooxygenase D (Gloeophyllum trabeum (strain ATCC 11539 / FP-39264 / Madison 617) (Brown rot fungus)).